The following is a 126-amino-acid chain: Methylglyoxal synthase (126 aa).

One can recognise an MGS-like domain in the interval 1–126; sequence MAGSKCLALI…AIKLLPTLEA (126 aa). Substrate-binding positions include His-12, Lys-16, 38 to 41, and 59 to 60; these read TGTT and SG. Asp-65 functions as the Proton donor/acceptor in the catalytic mechanism. His-92 is a binding site for substrate.

The protein belongs to the methylglyoxal synthase family.

It carries out the reaction dihydroxyacetone phosphate = methylglyoxal + phosphate. Catalyzes the formation of methylglyoxal from dihydroxyacetone phosphate. This is Methylglyoxal synthase from Rhizobium etli (strain ATCC 51251 / DSM 11541 / JCM 21823 / NBRC 15573 / CFN 42).